The chain runs to 319 residues: Olfactory receptor 5B21 (319 aa).

The Extracellular portion of the chain corresponds to 1–26 (MTSMENITEVTEFILLGLTDDPNLQV). Residue Asn-6 is glycosylated (N-linked (GlcNAc...) asparagine). The chain crosses the membrane as a helical span at residues 27-47 (PLLLIFLFIYLVTLIGNGGMM). The Cytoplasmic segment spans residues 48 to 55 (VIIFSDSH). Residues 56-76 (LHTPMYFFLSNLSFVDLGYSS) form a helical membrane-spanning segment. Residues 77–100 (AVAPKMVAALQSGNKVISYNGCAA) lie on the Extracellular side of the membrane. A disulfide bridge links Cys-98 with Cys-190. Residues 101-121 (QFFFFVGFATVECYLLASMAY) form a helical membrane-spanning segment. The Cytoplasmic segment spans residues 122–134 (DRHAAVCRPLHYT). The helical transmembrane segment at 135–155 (TTMTTGVCTILTIGSYTCGFL) threads the bilayer. At 156-197 (NASIHAADTFKLSFCGSNKINHFFCDIPPLLALACSSTHISK) the chain is on the extracellular side. The chain crosses the membrane as a helical span at residues 198–218 (LVVFFVVGFNVFFTLLVIIIS). At 219 to 238 (YFFIYIAIQNMKSSEGRKKA) the chain is on the cytoplasmic side. A helical membrane pass occupies residues 239-259 (FSTCASHLTAVSIFYGTIIFM). The Extracellular segment spans residues 260-272 (YLQPSSGQSMDTD). The chain crosses the membrane as a helical span at residues 273–293 (KIASVFYTVVIPMLNPLIYSL). The Cytoplasmic segment spans residues 294 to 319 (RNREVKSALWKILNRFYPASFSVSRK).

It belongs to the G-protein coupled receptor 1 family.

The protein localises to the cell membrane. Its function is as follows. Odorant receptor. The sequence is that of Olfactory receptor 5B21 from Mus musculus (Mouse).